The following is a 615-amino-acid chain: RNA polymerase sigma factor RpoD (615 aa).

Residues 166-216 form a disordered region; it reads GYIDPDDGITPPAAEVPPPVDTKTAKADDDSEDEEAEATEDEEEAESGPDP. A compositionally biased stretch (acidic residues) spans 194–212; sequence DDSEDEEAEATEDEEEAES. The sigma-70 factor domain-2 stretch occupies residues 381–451; that stretch reads MVEANLRLVI…TRSIADQART (71 aa). The short motif at 405–408 is the Interaction with polymerase core subunit RpoC element; sequence DLIQ. A sigma-70 factor domain-3 region spans residues 460–536; the sequence is ETINKLNRIS…DSTMQSPIDV (77 aa). The segment at 549–602 is sigma-70 factor domain-4; the sequence is VLSGLTAREAKVLRMRFGIDMNTDHTLEEVGKQFDVTRERIRQIEAKALRKLRH. A DNA-binding region (H-T-H motif) is located at residues 575 to 594; that stretch reads LEEVGKQFDVTRERIRQIEA.

It belongs to the sigma-70 factor family. RpoD/SigA subfamily. Interacts transiently with the RNA polymerase catalytic core.

The protein localises to the cytoplasm. Its function is as follows. Sigma factors are initiation factors that promote the attachment of RNA polymerase to specific initiation sites and are then released. This sigma factor is the primary sigma factor during exponential growth. This chain is RNA polymerase sigma factor RpoD, found in Pseudomonas protegens (strain DSM 19095 / LMG 27888 / CFBP 6595 / CHA0).